Consider the following 196-residue polypeptide: Peptidyl-tRNA hydrolase (196 aa).

Tyr-21 is a tRNA binding site. The active-site Proton acceptor is the His-26. Phe-72, Asn-74, and Asn-120 together coordinate tRNA.

Belongs to the PTH family. As to quaternary structure, monomer.

The protein resides in the cytoplasm. The catalysed reaction is an N-acyl-L-alpha-aminoacyl-tRNA + H2O = an N-acyl-L-amino acid + a tRNA + H(+). Hydrolyzes ribosome-free peptidyl-tRNAs (with 1 or more amino acids incorporated), which drop off the ribosome during protein synthesis, or as a result of ribosome stalling. In terms of biological role, catalyzes the release of premature peptidyl moieties from peptidyl-tRNA molecules trapped in stalled 50S ribosomal subunits, and thus maintains levels of free tRNAs and 50S ribosomes. The polypeptide is Peptidyl-tRNA hydrolase (Mycobacteroides abscessus (strain ATCC 19977 / DSM 44196 / CCUG 20993 / CIP 104536 / JCM 13569 / NCTC 13031 / TMC 1543 / L948) (Mycobacterium abscessus)).